Consider the following 510-residue polypeptide: Amidophosphoribosyltransferase (510 aa).

Cys-2 acts as the Nucleophile in catalysis. Residues 2-239 form the Glutamine amidotransferase type-2 domain; it reads CGILGIVLAN…PGEAVIIPKN (238 aa). Residues Asp-373 and Asp-374 each contribute to the Mg(2+) site.

In the C-terminal section; belongs to the purine/pyrimidine phosphoribosyltransferase family. Mg(2+) is required as a cofactor.

The catalysed reaction is 5-phospho-beta-D-ribosylamine + L-glutamate + diphosphate = 5-phospho-alpha-D-ribose 1-diphosphate + L-glutamine + H2O. It functions in the pathway purine metabolism; IMP biosynthesis via de novo pathway; N(1)-(5-phospho-D-ribosyl)glycinamide from 5-phospho-alpha-D-ribose 1-diphosphate: step 1/2. The protein is Amidophosphoribosyltransferase (ADE4) of Saccharomyces cerevisiae (strain ATCC 204508 / S288c) (Baker's yeast).